We begin with the raw amino-acid sequence, 143 residues long: Large ribosomal subunit protein uL15 (143 aa).

The disordered stretch occupies residues 20-52; it reads GRGIGSGKGKTAGRGHKGQHSRAGGYHKVGFEG. Residues 30 to 39 show a composition bias toward basic residues; that stretch reads TAGRGHKGQH.

Belongs to the universal ribosomal protein uL15 family. As to quaternary structure, part of the 50S ribosomal subunit.

Functionally, binds to the 23S rRNA. The protein is Large ribosomal subunit protein uL15 of Coxiella burnetii (strain CbuK_Q154) (Coxiella burnetii (strain Q154)).